A 325-amino-acid polypeptide reads, in one-letter code: tRNA N6-adenosine threonylcarbamoyltransferase (325 aa).

The Fe cation site is built by His-111 and His-115. Residues 134 to 138, Asp-167, Gly-180, Asp-184, and Asn-284 each bind substrate; that span reads LVSGG. A Fe cation-binding site is contributed by Asp-312.

It belongs to the KAE1 / TsaD family. Fe(2+) is required as a cofactor.

The protein resides in the cytoplasm. The enzyme catalyses L-threonylcarbamoyladenylate + adenosine(37) in tRNA = N(6)-L-threonylcarbamoyladenosine(37) in tRNA + AMP + H(+). In terms of biological role, required for the formation of a threonylcarbamoyl group on adenosine at position 37 (t(6)A37) in tRNAs that read codons beginning with adenine. Is involved in the transfer of the threonylcarbamoyl moiety of threonylcarbamoyl-AMP (TC-AMP) to the N6 group of A37, together with TsaE and TsaB. TsaD likely plays a direct catalytic role in this reaction. The chain is tRNA N6-adenosine threonylcarbamoyltransferase from Trichodesmium erythraeum (strain IMS101).